A 65-amino-acid polypeptide reads, in one-letter code: MSLQVPVAKEDNRESNSHLATLSGNLYTRMNLPHEPRARAGIVFFMEKQSNLALHSEFLLHVIIN.

It localises to the plastid. Its subcellular location is the chloroplast. This is an uncharacterized protein from Mesostigma viride (Green alga).